The chain runs to 458 residues: A-type ATP synthase subunit B (458 aa).

Belongs to the ATPase alpha/beta chains family. In terms of assembly, has multiple subunits with at least A(3), B(3), C, D, E, F, H, I and proteolipid K(x).

It localises to the cell membrane. Functionally, component of the A-type ATP synthase that produces ATP from ADP in the presence of a proton gradient across the membrane. The B chain is a regulatory subunit. In Methanocorpusculum labreanum (strain ATCC 43576 / DSM 4855 / Z), this protein is A-type ATP synthase subunit B.